A 228-amino-acid polypeptide reads, in one-letter code: Phosphoenolpyruvate guanylyltransferase (228 aa).

The phosphoenolpyruvate site is built by Thr148, Gly164, and Ser167.

This sequence belongs to the CofC family.

The catalysed reaction is phosphoenolpyruvate + GTP + H(+) = enolpyruvoyl-2-diphospho-5'-guanosine + diphosphate. Its pathway is cofactor biosynthesis; coenzyme F420 biosynthesis. In terms of biological role, guanylyltransferase that catalyzes the activation of phosphoenolpyruvate (PEP) as enolpyruvoyl-2-diphospho-5'-guanosine, via the condensation of PEP with GTP. It is involved in the biosynthesis of coenzyme F420, a hydride carrier cofactor. The sequence is that of Phosphoenolpyruvate guanylyltransferase from Thermomonospora curvata (strain ATCC 19995 / DSM 43183 / JCM 3096 / KCTC 9072 / NBRC 15933 / NCIMB 10081 / Henssen B9).